Here is a 128-residue protein sequence, read N- to C-terminus: Fluoride-specific ion channel FluC (128 aa).

Helical transmembrane passes span 4–24, 37–57, 65–85, and 101–121; these read VMGIIAVALGGAVGSLARYAI, FGTFIANLAGCLFIGLLWSFF, TFRLFLFTGLLGGLTTFSTFS, and FGYLFLSISLGLAMVAVGFFI. 2 residues coordinate Na(+): glycine 76 and threonine 79.

The protein belongs to the fluoride channel Fluc/FEX (TC 1.A.43) family.

The protein resides in the cell inner membrane. It carries out the reaction fluoride(in) = fluoride(out). With respect to regulation, na(+) is not transported, but it plays an essential structural role and its presence is essential for fluoride channel function. Its function is as follows. Fluoride-specific ion channel. Important for reducing fluoride concentration in the cell, thus reducing its toxicity. In Desulfotalea psychrophila (strain LSv54 / DSM 12343), this protein is Fluoride-specific ion channel FluC.